The chain runs to 330 residues: Fructose-1,6-bisphosphatase class 1 (330 aa).

Residues E84, D103, L105, and D106 each contribute to the Mg(2+) site. Substrate-binding positions include 106–109 (DGSS), N196, and K262. E268 is a Mg(2+) binding site.

Belongs to the FBPase class 1 family. In terms of assembly, homotetramer. Mg(2+) is required as a cofactor.

It is found in the cytoplasm. The enzyme catalyses beta-D-fructose 1,6-bisphosphate + H2O = beta-D-fructose 6-phosphate + phosphate. It participates in carbohydrate biosynthesis; gluconeogenesis. This chain is Fructose-1,6-bisphosphatase class 1, found in Shewanella frigidimarina (strain NCIMB 400).